Here is a 331-residue protein sequence, read N- to C-terminus: Ribosomal RNA small subunit methyltransferase H (331 aa).

Residues 56 to 58, Asp-76, Phe-100, Asp-122, and Gln-129 each bind S-adenosyl-L-methionine; that span reads GGH.

Belongs to the methyltransferase superfamily. RsmH family.

The protein resides in the cytoplasm. It catalyses the reaction cytidine(1402) in 16S rRNA + S-adenosyl-L-methionine = N(4)-methylcytidine(1402) in 16S rRNA + S-adenosyl-L-homocysteine + H(+). Specifically methylates the N4 position of cytidine in position 1402 (C1402) of 16S rRNA. The protein is Ribosomal RNA small subunit methyltransferase H of Chromohalobacter salexigens (strain ATCC BAA-138 / DSM 3043 / CIP 106854 / NCIMB 13768 / 1H11).